We begin with the raw amino-acid sequence, 218 residues long: Cell division protein SepF (218 aa).

Residues 25–115 (DVAASTDNVI…IANRREQYQQ (91 aa)) are disordered. Residues 29-43 (STDNVIPRSQQSVRA) show a composition bias toward polar residues. The span at 47–63 (PKQEPRNNHVQQDHQAR) shows a compositional bias: basic and acidic residues. Residues 102–115 (STSSIANRREQYQQ) show a composition bias toward polar residues.

It belongs to the SepF family. Homodimer. Interacts with FtsZ.

It localises to the cytoplasm. In terms of biological role, cell division protein that is part of the divisome complex and is recruited early to the Z-ring. Probably stimulates Z-ring formation, perhaps through the cross-linking of FtsZ protofilaments. Its function overlaps with FtsA. This chain is Cell division protein SepF, found in Streptococcus pyogenes serotype M5 (strain Manfredo).